Here is a 198-residue protein sequence, read N- to C-terminus: Recombination protein RecR (198 aa).

A C4-type zinc finger spans residues 56 to 71 (CKVCGNFSEEDECVIC). Residues 79-174 (GVICVVEEPK…RVSKLASGLP (96 aa)) enclose the Toprim domain.

The protein belongs to the RecR family.

In terms of biological role, may play a role in DNA repair. It seems to be involved in an RecBC-independent recombinational process of DNA repair. It may act with RecF and RecO. The protein is Recombination protein RecR of Tropheryma whipplei (strain TW08/27) (Whipple's bacillus).